Reading from the N-terminus, the 491-residue chain is UDP-N-acetylmuramate--L-alanine ligase (491 aa).

126 to 132 (GTHGKTT) is a binding site for ATP.

Belongs to the MurCDEF family.

It localises to the cytoplasm. It catalyses the reaction UDP-N-acetyl-alpha-D-muramate + L-alanine + ATP = UDP-N-acetyl-alpha-D-muramoyl-L-alanine + ADP + phosphate + H(+). It participates in cell wall biogenesis; peptidoglycan biosynthesis. Its function is as follows. Cell wall formation. This is UDP-N-acetylmuramate--L-alanine ligase from Shigella flexneri serotype 5b (strain 8401).